A 152-amino-acid polypeptide reads, in one-letter code: UPF0179 protein HQ_3004A (152 aa).

It belongs to the UPF0179 family.

The chain is UPF0179 protein HQ_3004A from Haloquadratum walsbyi (strain DSM 16790 / HBSQ001).